Here is a 393-residue protein sequence, read N- to C-terminus: CCA-adding enzyme (393 aa).

G27 and R30 together coordinate ATP. CTP contacts are provided by G27 and R30. D40 and D42 together coordinate Mg(2+). Positions 111, 154, 157, 160, and 163 each coordinate ATP. Residues R111, D154, R157, R160, and R163 each contribute to the CTP site.

Belongs to the tRNA nucleotidyltransferase/poly(A) polymerase family. Bacterial CCA-adding enzyme type 3 subfamily. In terms of assembly, homodimer. Mg(2+) is required as a cofactor.

It carries out the reaction a tRNA precursor + 2 CTP + ATP = a tRNA with a 3' CCA end + 3 diphosphate. The enzyme catalyses a tRNA with a 3' CCA end + 2 CTP + ATP = a tRNA with a 3' CCACCA end + 3 diphosphate. Functionally, catalyzes the addition and repair of the essential 3'-terminal CCA sequence in tRNAs without using a nucleic acid template. Adds these three nucleotides in the order of C, C, and A to the tRNA nucleotide-73, using CTP and ATP as substrates and producing inorganic pyrophosphate. tRNA 3'-terminal CCA addition is required both for tRNA processing and repair. Also involved in tRNA surveillance by mediating tandem CCA addition to generate a CCACCA at the 3' terminus of unstable tRNAs. While stable tRNAs receive only 3'-terminal CCA, unstable tRNAs are marked with CCACCA and rapidly degraded. The chain is CCA-adding enzyme from Listeria monocytogenes serotype 4b (strain F2365).